A 153-amino-acid chain; its full sequence is Histone H2B.4 (153 aa).

2 stretches are compositionally biased toward basic and acidic residues: residues 1-28 and 36-53; these read MAPK…EKAP and EKRL…EGKK. A disordered region spans residues 1 to 61; that stretch reads MAPKAEKKPA…KKAGRKKAKK (61 aa). N6-acetyllysine is present on residues Lys-7 and Lys-37. Lys-149 participates in a covalent cross-link: Glycyl lysine isopeptide (Lys-Gly) (interchain with G-Cter in ubiquitin).

It belongs to the histone H2B family. As to quaternary structure, the nucleosome is a histone octamer containing two molecules each of H2A, H2B, H3 and H4 assembled in one H3-H4 heterotetramer and two H2A-H2B heterodimers. The octamer wraps approximately 147 bp of DNA. In terms of processing, can be acetylated to form H2BK6ac and H2BK33ac. Monoubiquitinated by BRE1 to form H2BK143ub1 and deubiquitinated by UBP26. Required for heterochromatic histone H3 di- and trimethylation at H3K4me. May give a specific tag for epigenetic transcriptional activation.

It localises to the nucleus. Its subcellular location is the chromosome. In terms of biological role, core component of nucleosome. Nucleosomes wrap and compact DNA into chromatin, limiting DNA accessibility to the cellular machineries which require DNA as a template. Histones thereby play a central role in transcription regulation, DNA repair, DNA replication and chromosomal stability. DNA accessibility is regulated via a complex set of post-translational modifications of histones, also called histone code, and nucleosome remodeling. The chain is Histone H2B.4 (H2B.4) from Oryza sativa subsp. indica (Rice).